The following is a 734-amino-acid chain: Photosystem I P700 chlorophyll a apoprotein A2 (734 aa).

The next 8 helical transmembrane spans lie at 46-69 (IFAS…FHVA), 135-158 (LYNG…LHLE), 175-199 (LNHH…HVAI), 273-291 (IAHH…GHMY), 330-353 (LHFQ…QHMY), 369-395 (AALY…IFFI), 417-439 (AIIS…LYVH), and 517-535 (FLVH…LILV). Residues Cys559 and Cys568 each coordinate [4Fe-4S] cluster. 2 helical membrane passes run 575–596 (AFYL…YWHW) and 643–665 (LAVW…MFLI). 3 residues coordinate chlorophyll a: His654, Met662, and Tyr670. Trp671 contacts phylloquinone. A helical membrane pass occupies residues 707-727 (LVGLAHFSVGYVFTYAAFLIA).

It belongs to the PsaA/PsaB family. The PsaA/B heterodimer binds the P700 chlorophyll special pair and subsequent electron acceptors. PSI consists of a core antenna complex that captures photons, and an electron transfer chain that converts photonic excitation into a charge separation. The eukaryotic PSI reaction center is composed of at least 11 subunits. P700 is a chlorophyll a/chlorophyll a' dimer, A0 is one or more chlorophyll a, A1 is one or both phylloquinones and FX is a shared 4Fe-4S iron-sulfur center. is required as a cofactor.

Its subcellular location is the plastid. The protein resides in the chloroplast thylakoid membrane. The enzyme catalyses reduced [plastocyanin] + hnu + oxidized [2Fe-2S]-[ferredoxin] = oxidized [plastocyanin] + reduced [2Fe-2S]-[ferredoxin]. In terms of biological role, psaA and PsaB bind P700, the primary electron donor of photosystem I (PSI), as well as the electron acceptors A0, A1 and FX. PSI is a plastocyanin/cytochrome c6-ferredoxin oxidoreductase, converting photonic excitation into a charge separation, which transfers an electron from the donor P700 chlorophyll pair to the spectroscopically characterized acceptors A0, A1, FX, FA and FB in turn. Oxidized P700 is reduced on the lumenal side of the thylakoid membrane by plastocyanin or cytochrome c6. In Euglena gracilis, this protein is Photosystem I P700 chlorophyll a apoprotein A2.